The sequence spans 805 residues: Transducer protein BasT (805 aa).

Helical transmembrane passes span 25–45 (FNVL…YIHL) and 296–316 (NLAG…LTVG). HAMP domains lie at 317 to 370 (RRTS…TAAS) and 437 to 490 (ERLE…ATLA). Residues 509–745 (SAAEIRSASD…EVVTMIDEVT (237 aa)) form the Methyl-accepting transducer domain. The tract at residues 513-532 (IRSASDQVSESVQDISADAD) is disordered. The span at 516-526 (ASDQVSESVQD) shows a compositional bias: polar residues. Residues glutamate 554, glutamate 736, and glutamate 763 each carry the glutamate methyl ester (Glu) modification. The disordered stretch occupies residues 752-779 (ATESQQVSAAAEEQAASVSEVAGRADDL). Residues 754-773 (ESQQVSAAAEEQAASVSEVA) are compositionally biased toward low complexity.

Belongs to the methyl-accepting chemotaxis (MCP) protein family. In terms of assembly, interacts with CheA, CheY, CheW1 and CheW2. In terms of processing, methylated by CheR.

Its subcellular location is the cell membrane. Functionally, mediates chemotaxis towards five attractant amino acids (leucine, isoleucine, valine, methionine and cysteine). Probably transduces the signal from the substrate-binding protein BasB to the histidine kinase CheA. The sequence is that of Transducer protein BasT (basT) from Halobacterium salinarum (strain ATCC 29341 / DSM 671 / R1).